A 251-amino-acid polypeptide reads, in one-letter code: ATP synthase subunit a (251 aa).

The next 7 membrane-spanning stretches (helical) occupy residues 29–49 (FTQS…ITLV), 56–73 (LVPG…EFIA), 87–107 (FVPL…FGMI), 117–137 (IIVT…YGFM), 159–181 (LIVA…RLFA), 192–212 (IFAG…LSPL), and 218–238 (VAIT…FATL).

It belongs to the ATPase A chain family. In terms of assembly, F-type ATPases have 2 components, CF(1) - the catalytic core - and CF(0) - the membrane proton channel. CF(1) has five subunits: alpha(3), beta(3), gamma(1), delta(1), epsilon(1). CF(0) has three main subunits: a(1), b(2) and c(9-12). The alpha and beta chains form an alternating ring which encloses part of the gamma chain. CF(1) is attached to CF(0) by a central stalk formed by the gamma and epsilon chains, while a peripheral stalk is formed by the delta and b chains.

It localises to the cell inner membrane. Key component of the proton channel; it plays a direct role in the translocation of protons across the membrane. The protein is ATP synthase subunit a of Methylobacterium sp. (strain 4-46).